The following is a 334-amino-acid chain: Phosphate acyltransferase (334 aa).

The protein belongs to the PlsX family. Homodimer. Probably interacts with PlsY.

The protein resides in the cytoplasm. It catalyses the reaction a fatty acyl-[ACP] + phosphate = an acyl phosphate + holo-[ACP]. It participates in lipid metabolism; phospholipid metabolism. Catalyzes the reversible formation of acyl-phosphate (acyl-PO(4)) from acyl-[acyl-carrier-protein] (acyl-ACP). This enzyme utilizes acyl-ACP as fatty acyl donor, but not acyl-CoA. This is Phosphate acyltransferase from Mycoplasma capricolum subsp. capricolum (strain California kid / ATCC 27343 / NCTC 10154).